A 451-amino-acid polypeptide reads, in one-letter code: Magnesium transporter MgtE (451 aa).

The Cytoplasmic segment spans residues 1 to 285; that stretch reads MVQNMTYDEL…TKAYVAAYRR (285 aa). Mg(2+) is bound by residues aspartate 64 and aspartate 96. CBS domains are found at residues 140–203 and 204–260; these read MTNR…VQDL and MFTR…EADE. Mg(2+) is bound by residues glutamate 218, aspartate 228, aspartate 249, aspartate 252, glutamate 257, glutamate 260, and aspartate 261. A helical transmembrane segment spans residues 286–306; sequence LPWLILLLFIGLISGSIISYF. Topologically, residues 307 to 311 are extracellular; sequence EDALK. Residues 312-332 traverse the membrane as a helical segment; sequence QVVALAFFMPMVSGMTGNTGT. Residues 333-371 are Cytoplasmic-facing; that stretch reads QSLAVVIRGLSKEEMNKKTIVRLIFREFRTSIFIGAVCS. 2 consecutive transmembrane segments (helical) span residues 372–392 and 393–413; these read VLIA…FVVA and SSLF…PIIL. Residues 414-427 are Cytoplasmic-facing; that stretch reads HKLKVDPAIASGPL. Residues aspartate 419 and aspartate 433 each contribute to the Mg(2+) site. The helical transmembrane segment at 428-448 threads the bilayer; sequence ITTLNDILSLLIYFGIATAFI. Over 449–451 the chain is Extracellular; it reads HSL.

It belongs to the SLC41A transporter family. Homodimer.

Its subcellular location is the cell membrane. The enzyme catalyses Mg(2+)(in) = Mg(2+)(out). With respect to regulation, binds cyclic di-AMP (c-di-AMP), which may regulate the transporter activity. Its function is as follows. Acts as a magnesium transporter. MgtE is the dominant transporter under rich-medium growth conditions, and it may provide the primary route of magnesium import in B.subtilis, while the other putative transport proteins are likely to be utilized for more-specialized growth conditions. The polypeptide is Magnesium transporter MgtE (Bacillus subtilis (strain 168)).